The sequence spans 76 residues: Spermatid nuclear transition protein 3 (76 aa).

The span at 1–11 (AKVTEKSWQPQ) shows a compositional bias: polar residues. Disordered stretches follow at residues 1-34 (AKVT…GKVR) and 56-76 (VITT…ETIP). The segment covering 16 to 34 (KRWKKRKTPSQPRSRGKVR) has biased composition (basic residues).

Its subcellular location is the nucleus. It is found in the chromosome. Involved in nuclear basic protein transition: histones are replaced by spermatid specific proteins which are themselves replaced by protamines in late spermatids. This chain is Spermatid nuclear transition protein 3 (TNP3), found in Sus scrofa (Pig).